Here is a 144-residue protein sequence, read N- to C-terminus: Large ribosomal subunit protein uL15 (144 aa).

The span at 1-13 (MVRERTKKLRGGH) shows a compositional bias: basic residues. The tract at residues 1–32 (MVRERTKKLRGGHYGRGFKAGRGKGKKGGSGN) is disordered.

It belongs to the universal ribosomal protein uL15 family. As to quaternary structure, part of the 50S ribosomal subunit.

Functionally, binds to the 23S rRNA. This chain is Large ribosomal subunit protein uL15, found in Thermoplasma acidophilum (strain ATCC 25905 / DSM 1728 / JCM 9062 / NBRC 15155 / AMRC-C165).